The sequence spans 199 residues: Potassium-transporting ATPase KdpC subunit (199 aa).

The chain crosses the membrane as a helical span at residues 21–43; that stretch reads LALLFVCGVVYTGTVTQLGGALF.

Belongs to the KdpC family. In terms of assembly, the system is composed of three essential subunits: KdpA, KdpB and KdpC.

The protein resides in the cell inner membrane. Functionally, part of the high-affinity ATP-driven potassium transport (or Kdp) system, which catalyzes the hydrolysis of ATP coupled with the electrogenic transport of potassium into the cytoplasm. This subunit acts as a catalytic chaperone that increases the ATP-binding affinity of the ATP-hydrolyzing subunit KdpB by the formation of a transient KdpB/KdpC/ATP ternary complex. This chain is Potassium-transporting ATPase KdpC subunit, found in Shewanella putrefaciens (strain CN-32 / ATCC BAA-453).